The primary structure comprises 147 residues: Hemoglobin subunit beta (147 aa).

One can recognise a Globin domain in the interval 3–147 (EWTDDERAII…VVSALGRQYH (145 aa)). Heme b is bound by residues His64 and His93.

Belongs to the globin family. Heterotetramer of two alpha chains and two beta chains. In terms of tissue distribution, red blood cells.

Functionally, involved in oxygen transport from gills to the various peripheral tissues. This chain is Hemoglobin subunit beta (hbb), found in Merlangius merlangus (Whiting).